The following is an 837-amino-acid chain: Histone acetyltransferase KAT2A (837 aa).

A disordered region spans residues methionine 1–arginine 99. Residue alanine 2 is modified to N-acetylalanine. Over residues alanine 7–alanine 51 the composition is skewed to pro residues. Over residues threonine 58 to glycine 74 the composition is skewed to gly residues. Low complexity predominate over residues aspartate 75–alanine 87. A compositionally biased stretch (basic residues) spans serine 88–arginine 99. The residue at position 307 (serine 307) is a Phosphoserine. The disordered stretch occupies residues phenylalanine 407–arginine 434. Over residues asparagine 416–glycine 425 the composition is skewed to low complexity. The 154-residue stretch at valine 503–asparagine 656 folds into the N-acetyltransferase domain. Lysine 549 is modified (N6-acetyllysine). Catalysis depends on glutamate 575, which acts as the Proton donor/acceptor. Residues cysteine 579 to valine 581, glutamine 586 to threonine 592, and tyrosine 617 each bind acetyl-CoA. Succinyl-CoA-binding positions include cysteine 579–valine 581, glutamine 586–threonine 592, and tyrosine 617. Residues leucine 639 to alanine 648 form a loop 3 region. Lysine 728 is covalently cross-linked (Glycyl lysine isopeptide (Lys-Gly) (interchain with G-Cter in SUMO2)). Residues lysine 728–glycine 832 enclose the Bromo domain. The residue at position 735 (threonine 735) is a Phosphothreonine. Residues lysine 759 and lysine 791 each participate in a glycyl lysine isopeptide (Lys-Gly) (interchain with G-Cter in SUMO2) cross-link.

The protein belongs to the acetyltransferase family. GCN5 subfamily. In terms of assembly, homooligomer; may form a tetramer of homodimers. Interacts with EP300, CREBBP and ADA2. Component of the TFTC-HAT complex, at least composed of TAF5L, TAF6L, TAF3, TADA3L, SUPT3H/SPT3, TAF2/TAFII150, TAF4/TAFII135, TAF5/TAFII100, KAT2A/GCN5L2, TAF10 and TRRAP. Component of the STAGA transcription coactivator-HAT complex, at least composed of SUPT3H, KAT2A, SUPT7L, TAF5L, TAF6L, TADA3L, TAD1L, TAF10, TAF12, TRRAP and TAF9. The STAGA core complex is associated with a subcomplex required for histone deubiquitination composed of ATXN7L3, ENY2 and USP22. Component of the ADA2A-containing complex (ATAC), composed of KAT14, KAT2A, TADA2L, TADA3L, ZZ3, MBIP, WDR5, YEATS2, CCDC101 and DR1. In the complex, it probably interacts directly with KAT14, MBIP and WDR5. Interacts with PML. Interacts with CEBPB. Interacts with TACC1, TACC2 and TACC3. Interacts with RELA. Interacts with NFATC2. Interacts with TBX5. Interacts with PLK4. Associates with the 2-oxoglutarate dehydrogenase complex. Interacts with XPC; leading to KAT2A recruitment to promoters and subsequent acetylation of histones. Interacts with ERCC3/XPB; leading to KAT2A recruitment to promoters and subsequent acetylation of histones. Interacts with ISL1. Interactions of ISL1 with MLIP1 or KAT2A may be mutually exclusive. (Microbial infection) Interacts with and acetylates HIV-1 Tat. Acetylated at Lys-549, inhibiting the protein acetyltransferase activity. Deacetylation at Lys-549 by SIRT6 promotes phosphorylation at Ser-307 and Thr-735 and subsequent activation of the protein acetyltransferase activity, leading to acetylation and inactivation of PPARGC1A. In terms of tissue distribution, expressed in all tissues tested.

The protein resides in the nucleus. Its subcellular location is the chromosome. It is found in the cytoplasm. It localises to the cytoskeleton. The protein localises to the microtubule organizing center. The protein resides in the centrosome. The catalysed reaction is L-lysyl-[histone] + acetyl-CoA = N(6)-acetyl-L-lysyl-[histone] + CoA + H(+). The enzyme catalyses L-lysyl-[protein] + acetyl-CoA = N(6)-acetyl-L-lysyl-[protein] + CoA + H(+). It carries out the reaction succinyl-CoA + L-lysyl-[protein] = N(6)-succinyl-L-lysyl-[protein] + CoA + H(+). It catalyses the reaction glutaryl-CoA + L-lysyl-[protein] = N(6)-glutaryl-L-lysyl-[protein] + CoA + H(+). Protein lysine acyltransferase that can act as a acetyltransferase, glutaryltransferase, succinyltransferase or malonyltransferase, depending on the context. Acts as a histone lysine succinyltransferase: catalyzes succinylation of histone H3 on 'Lys-79' (H3K79succ), with a maximum frequency around the transcription start sites of genes. Succinylation of histones gives a specific tag for epigenetic transcription activation. Association with the 2-oxoglutarate dehydrogenase complex, which provides succinyl-CoA, is required for histone succinylation. In different complexes, functions either as an acetyltransferase (HAT) or as a succinyltransferase: in the SAGA and ATAC complexes, acts as a histone acetyltransferase. Has significant histone acetyltransferase activity with core histones, but not with nucleosome core particles. Has a a strong preference for acetylation of H3 at 'Lys-9' (H3K9ac). Acetylation of histones gives a specific tag for epigenetic transcription activation. Recruited by the XPC complex at promoters, where it specifically mediates acetylation of histone variant H2A.Z.1/H2A.Z, thereby promoting expression of target genes. Involved in long-term memory consolidation and synaptic plasticity: acts by promoting expression of a hippocampal gene expression network linked to neuroactive receptor signaling. Acts as a positive regulator of T-cell activation: upon TCR stimulation, recruited to the IL2 promoter following interaction with NFATC2 and catalyzes acetylation of histone H3 at 'Lys-9' (H3K9ac), leading to promote IL2 expression. Required for growth and differentiation of craniofacial cartilage and bone by regulating acetylation of histone H3 at 'Lys-9' (H3K9ac). Regulates embryonic stem cell (ESC) pluripotency and differentiation. Also acetylates non-histone proteins, such as CEBPB, MRE11, PPARGC1A, PLK4 and TBX5. Involved in heart and limb development by mediating acetylation of TBX5, acetylation regulating nucleocytoplasmic shuttling of TBX5. Acts as a negative regulator of centrosome amplification by mediating acetylation of PLK4. Acts as a negative regulator of gluconeogenesis by mediating acetylation and subsequent inactivation of PPARGC1A. Also acts as a histone glutaryltransferase: catalyzes glutarylation of histone H4 on 'Lys-91' (H4K91glu), a mark that destabilizes nucleosomes by promoting dissociation of the H2A-H2B dimers from nucleosomes. In terms of biological role, (Microbial infection) In case of HIV-1 infection, it is recruited by the viral protein Tat. Regulates Tat's transactivating activity and may help inducing chromatin remodeling of proviral genes. The protein is Histone acetyltransferase KAT2A of Homo sapiens (Human).